Reading from the N-terminus, the 347-residue chain is Quinolinate synthase (347 aa).

2 residues coordinate iminosuccinate: histidine 47 and serine 68. [4Fe-4S] cluster is bound at residue cysteine 113. Iminosuccinate-binding positions include 139 to 141 (YAN) and serine 156. Cysteine 200 serves as a coordination point for [4Fe-4S] cluster. Iminosuccinate is bound by residues 226–228 (HPE) and threonine 243. A [4Fe-4S] cluster-binding site is contributed by cysteine 297.

This sequence belongs to the quinolinate synthase family. Type 1 subfamily. [4Fe-4S] cluster is required as a cofactor.

Its subcellular location is the cytoplasm. It catalyses the reaction iminosuccinate + dihydroxyacetone phosphate = quinolinate + phosphate + 2 H2O + H(+). It participates in cofactor biosynthesis; NAD(+) biosynthesis; quinolinate from iminoaspartate: step 1/1. Functionally, catalyzes the condensation of iminoaspartate with dihydroxyacetone phosphate to form quinolinate. This Shigella boydii serotype 4 (strain Sb227) protein is Quinolinate synthase.